The primary structure comprises 365 residues: Peptide chain release factor 1 (365 aa).

An N5-methylglutamine modification is found at Gln-242.

This sequence belongs to the prokaryotic/mitochondrial release factor family. Post-translationally, methylated by PrmC. Methylation increases the termination efficiency of RF1.

It is found in the cytoplasm. Peptide chain release factor 1 directs the termination of translation in response to the peptide chain termination codons UAG and UAA. In Fusobacterium nucleatum subsp. nucleatum (strain ATCC 25586 / DSM 15643 / BCRC 10681 / CIP 101130 / JCM 8532 / KCTC 2640 / LMG 13131 / VPI 4355), this protein is Peptide chain release factor 1.